Consider the following 143-residue polypeptide: Mannitol-specific phosphotransferase enzyme IIA component (143 aa).

The PTS EIIA type-2 domain occupies 1–142 (MKLLKNNIYI…DKVLEFLAKH (142 aa)). The Tele-phosphohistidine intermediate role is filled by His-61. A Phosphohistidine; by HPr modification is found at His-61.

It localises to the cytoplasm. In terms of biological role, the phosphoenolpyruvate-dependent sugar phosphotransferase system (sugar PTS), a major carbohydrate active transport system, catalyzes the phosphorylation of incoming sugar substrates concomitantly with their translocation across the cell membrane. The enzyme II CmtAB PTS system is involved in D-mannitol transport. The protein is Mannitol-specific phosphotransferase enzyme IIA component (mtlF) of Mycoplasma pneumoniae (strain ATCC 29342 / M129 / Subtype 1) (Mycoplasmoides pneumoniae).